Here is a 363-residue protein sequence, read N- to C-terminus: 3-isopropylmalate dehydrogenase (363 aa).

78–91 (GPKWEHLPPDQQPE) provides a ligand contact to NAD(+). Substrate is bound by residues Arg99, Arg109, Arg138, and Asp227. Mg(2+) contacts are provided by Asp227, Asp251, and Asp255. Position 285-297 (285-297 (GSAPDIAGKNIAN)) interacts with NAD(+).

Belongs to the isocitrate and isopropylmalate dehydrogenases family. LeuB type 1 subfamily. Homodimer. Mg(2+) is required as a cofactor. It depends on Mn(2+) as a cofactor.

Its subcellular location is the cytoplasm. It carries out the reaction (2R,3S)-3-isopropylmalate + NAD(+) = 4-methyl-2-oxopentanoate + CO2 + NADH. The protein operates within amino-acid biosynthesis; L-leucine biosynthesis; L-leucine from 3-methyl-2-oxobutanoate: step 3/4. Requires K(+) ions for optimum activity. Catalyzes the oxidation of 3-carboxy-2-hydroxy-4-methylpentanoate (3-isopropylmalate) to 3-carboxy-4-methyl-2-oxopentanoate. The product decarboxylates to 4-methyl-2 oxopentanoate. This Escherichia coli (strain K12) protein is 3-isopropylmalate dehydrogenase.